The following is a 236-amino-acid chain: tRNA (guanine-N(1)-)-methyltransferase (236 aa).

Residues Gly110 and 129–134 contribute to the S-adenosyl-L-methionine site; that span reads LGDFVL.

The protein belongs to the RNA methyltransferase TrmD family. In terms of assembly, homodimer.

It localises to the cytoplasm. It carries out the reaction guanosine(37) in tRNA + S-adenosyl-L-methionine = N(1)-methylguanosine(37) in tRNA + S-adenosyl-L-homocysteine + H(+). In terms of biological role, specifically methylates guanosine-37 in various tRNAs. The polypeptide is tRNA (guanine-N(1)-)-methyltransferase (Clostridium perfringens (strain ATCC 13124 / DSM 756 / JCM 1290 / NCIMB 6125 / NCTC 8237 / Type A)).